The primary structure comprises 243 residues: tRNA (guanine-N(1)-)-methyltransferase (243 aa).

S-adenosyl-L-methionine contacts are provided by residues Gly112 and 131–136 (LGDYVL).

Belongs to the RNA methyltransferase TrmD family. Homodimer.

It is found in the cytoplasm. The catalysed reaction is guanosine(37) in tRNA + S-adenosyl-L-methionine = N(1)-methylguanosine(37) in tRNA + S-adenosyl-L-homocysteine + H(+). Functionally, specifically methylates guanosine-37 in various tRNAs. The polypeptide is tRNA (guanine-N(1)-)-methyltransferase (Leuconostoc mesenteroides subsp. mesenteroides (strain ATCC 8293 / DSM 20343 / BCRC 11652 / CCM 1803 / JCM 6124 / NCDO 523 / NBRC 100496 / NCIMB 8023 / NCTC 12954 / NRRL B-1118 / 37Y)).